We begin with the raw amino-acid sequence, 259 residues long: Ribosomal RNA small subunit methyltransferase J (259 aa).

S-adenosyl-L-methionine is bound by residues 101 to 102 (RD), 117 to 118 (ER), 153 to 154 (SS), and D176.

The protein belongs to the methyltransferase superfamily. RsmJ family.

The protein localises to the cytoplasm. It carries out the reaction guanosine(1516) in 16S rRNA + S-adenosyl-L-methionine = N(2)-methylguanosine(1516) in 16S rRNA + S-adenosyl-L-homocysteine + H(+). Specifically methylates the guanosine in position 1516 of 16S rRNA. This chain is Ribosomal RNA small subunit methyltransferase J, found in Vibrio campbellii (strain ATCC BAA-1116).